Here is a 982-residue protein sequence, read N- to C-terminus: MSSRPSSAVPNSASLSEDQSSDRSKFPKADDLIDERDRKLTELYCVSRLNQLLELTDENKLRKEIDAFLKKNDIRRGIRFDEASLPKLLHTAATPITKKKLKDVNLINVPNQRLSDSKMSRELPENSENVSVKSESHFVPSHDNSIRENMMDSLRPAEKTGGMWNKRPLESTMGGEEERHEKRQKMQSQSLESSNNSEMASLPISPRPPVPNALAHYTYYENIEYPPADPTEVQPAVKFKDPLIKNIMAKEIDTSDHYNENNVDALETVFLLMNDYIPSKIPQALPLAELKYMSQTLPLINLIPRAHKALTTNIINNALNEARITVVGSRIEELRRLGLWSLRQPKRFIDPWKQHNTHQNILLEEAKWMQADFKEGHKYKVAICTAMAQAIKDYWTYGEICCVKRKTLLPGKENKLSDDGRISEKSGRPSDTSRNDSDISIAGKDDIGIIANVDDITEKESAAANDNDENGKNEAGAKSDFDFADGLLSQEGAHDQIISSIDTKLLLKKPSSSSEVVLIQHEVAASSALIETEESKKELAPPFKLSIFVDELNTFEKTLIQDLPLYNGINEERPKKDDSLPFIPISKSVVSLDDNGFYKLLERQLIDEEPSISQLSKRRGMFYGNRRNHYLRPPAVPSLRYLQNRTPTIWLSEDDQELVKNINTYGYNWELISAHMTHRLTYSYLSNIERRTPWQCFERFVQLNERFNFSDLKGPRAHSAQQWLIEAHKFQQRQNRRISPLGVNTESIQRGHRRLRWASMFEAIRKCMKKRENTPRPNPTQPRKPLDCKNMKVPTPAEMSLLKAQRDEALRRDIQLRRTVKNRLQQRQQQSQQAHSSRAQSPIPSNGKSSSNLARNGQASAPRPNQKQYTEQDIIESYSRKLLEQKPDIGPEMALKAAKNYYRTLREQQQQLKQHQIQQQRQQLQEESSHVQQLQQLQPGSQAPPPKSSPSQSSLSNISNINSAPRIKSPTPQEILQRFQKQ.

Over residues 1–18 (MSSRPSSAVPNSASLSED) the composition is skewed to polar residues. Disordered regions lie at residues 1–31 (MSSRPSSAVPNSASLSEDQSSDRSKFPKADD), 115–143 (SDSKMSRELPENSENVSVKSESHFVPSHD), 157–207 (AEKT…ISPR), and 414–440 (NKLSDDGRISEKSGRPSDTSRNDSDIS). Composition is skewed to basic and acidic residues over residues 20 to 31 (SSDRSKFPKADD) and 115 to 124 (SDSKMSRELP). Residues 186 to 199 (MQSQSLESSNNSEM) show a composition bias toward low complexity. An HSA domain is found at 346 to 425 (KRFIDPWKQH…LSDDGRISEK (80 aa)). The Myb-like domain occupies 642–704 (LQNRTPTIWL…QCFERFVQLN (63 aa)). Disordered regions lie at residues 768-792 (MKKRENTPRPNPTQPRKPLDCKNMK), 822-872 (NRLQ…YTEQ), and 913-982 (KQHQ…FQKQ). Residues 825–841 (QQRQQQSQQAHSSRAQS) show a composition bias toward low complexity. S841 bears the Phosphoserine mark. Over residues 842–871 (PIPSNGKSSSNLARNGQASAPRPNQKQYTE) the composition is skewed to polar residues. Composition is skewed to low complexity over residues 913–941 (KQHQIQQQRQQLQEESSHVQQLQQLQPGS) and 949–965 (SPSQSSLSNISNINSAP). T971 is subject to Phosphothreonine.

Belongs to the EAF1 family. As to quaternary structure, component of the NuA4 histone acetyltransferase complex composed of at least ACT1, ARP4, YAF9, VID21, SWC4, EAF3, EAF5, EAF6, EAF7, EPL1, ESA1, TRA1 and YNG2. Interacts with SWC4.

Its subcellular location is the nucleus. In terms of biological role, component of the NuA4 histone acetyltransferase complex which is involved in transcriptional activation of selected genes principally by acetylation of nucleosomal histone H4 and H2A. The NuA4 complex is also involved in DNA repair. This is Chromatin modification-related protein EAF1 (EAF1) from Saccharomyces cerevisiae (strain ATCC 204508 / S288c) (Baker's yeast).